Consider the following 214-residue polypeptide: Pyridoxine/pyridoxamine 5'-phosphate oxidase (214 aa).

Substrate-binding positions include 9 to 12 (RKNY) and Lys-67. Residues 62–67 (RMVLLK), 77–78 (YT), Lys-84, and Gln-106 each bind FMN. Substrate is bound by residues Tyr-124, Arg-128, and Ser-132. FMN-binding positions include 141-142 (QS) and Trp-186. Residue 192-194 (RLH) participates in substrate binding. Arg-196 is an FMN binding site.

The protein belongs to the pyridoxamine 5'-phosphate oxidase family. As to quaternary structure, homodimer. FMN serves as cofactor.

The enzyme catalyses pyridoxamine 5'-phosphate + O2 + H2O = pyridoxal 5'-phosphate + H2O2 + NH4(+). The catalysed reaction is pyridoxine 5'-phosphate + O2 = pyridoxal 5'-phosphate + H2O2. Its pathway is cofactor metabolism; pyridoxal 5'-phosphate salvage; pyridoxal 5'-phosphate from pyridoxamine 5'-phosphate: step 1/1. It functions in the pathway cofactor metabolism; pyridoxal 5'-phosphate salvage; pyridoxal 5'-phosphate from pyridoxine 5'-phosphate: step 1/1. Functionally, catalyzes the oxidation of either pyridoxine 5'-phosphate (PNP) or pyridoxamine 5'-phosphate (PMP) into pyridoxal 5'-phosphate (PLP). This is Pyridoxine/pyridoxamine 5'-phosphate oxidase from Gloeothece citriformis (strain PCC 7424) (Cyanothece sp. (strain PCC 7424)).